Here is a 320-residue protein sequence, read N- to C-terminus: Histidine decarboxylase proenzyme (320 aa).

Positions 2 to 11 (NKNLEANRNR) are excised as a propeptide. Residue Ser-98 is modified to Pyruvic acid (Ser). Glu-215 functions as the Proton donor in the catalytic mechanism.

The proenzyme is a hexamer of identical pi chains; each pi chain monomer is cleaved to form a small (or beta) chain and a large (or alpha) chain by non-hydrolytic self-catalysis. Pyruvate serves as cofactor.

It carries out the reaction L-histidine + H(+) = histamine + CO2. The polypeptide is Histidine decarboxylase proenzyme (hdc) (Clostridium perfringens (strain 13 / Type A)).